A 269-amino-acid chain; its full sequence is 1-(5-phosphoribosyl)-5-[(5-phosphoribosylamino)methylideneamino] imidazole-4-carboxamide isomerase (269 aa).

Asp-10 acts as the Proton acceptor in catalysis. Catalysis depends on Asp-132, which acts as the Proton donor.

Belongs to the HisA/HisF family.

It localises to the cytoplasm. The enzyme catalyses 1-(5-phospho-beta-D-ribosyl)-5-[(5-phospho-beta-D-ribosylamino)methylideneamino]imidazole-4-carboxamide = 5-[(5-phospho-1-deoxy-D-ribulos-1-ylimino)methylamino]-1-(5-phospho-beta-D-ribosyl)imidazole-4-carboxamide. It functions in the pathway amino-acid biosynthesis; L-histidine biosynthesis; L-histidine from 5-phospho-alpha-D-ribose 1-diphosphate: step 4/9. The chain is 1-(5-phosphoribosyl)-5-[(5-phosphoribosylamino)methylideneamino] imidazole-4-carboxamide isomerase from Xylella fastidiosa (strain Temecula1 / ATCC 700964).